A 174-amino-acid chain; its full sequence is CASP-like protein 4D2 (174 aa).

Over 1 to 14 (MAPPPPSPPAVSLK) the chain is Cytoplasmic. The helical transmembrane segment at 15 to 35 (VLLLLLRVLTGVFLVIALIIL) threads the bilayer. The Extracellular segment spans residues 36–60 (STNSVTIVSQGSALKFHFKDVYAYR). A helical membrane pass occupies residues 61–81 (YMLSAAVIGLVYAVIQLFFTI). At 82–97 (SEFATGVKNPFNYQLD) the chain is on the cytoplasmic side. A helical membrane pass occupies residues 98 to 118 (FYGDKLISYLVATGSAAGFGV). Residues 119-150 (TKDLKDTFLALVALDSTDPVDKFFSKGYASAS) are Extracellular-facing. Residues 151-171 (LLLFAFICLAVLSVFSSFAMA) traverse the membrane as a helical segment. Residues 172 to 174 (KRN) lie on the Cytoplasmic side of the membrane.

This sequence belongs to the Casparian strip membrane proteins (CASP) family. In terms of assembly, homodimer and heterodimers.

It is found in the cell membrane. This Arabidopsis thaliana (Mouse-ear cress) protein is CASP-like protein 4D2.